Here is a 340-residue protein sequence, read N- to C-terminus: Outer membrane protein B (340 aa).

The N-terminal stretch at 1–26 is a signal peptide; sequence MSSKLVNYLRLTFLSFLGIASTSLDA.

This sequence belongs to the chlamydial OMP family.

It is found in the cell outer membrane. The chain is Outer membrane protein B (ompB) from Chlamydia trachomatis serovar D (strain ATCC VR-885 / DSM 19411 / UW-3/Cx).